The primary structure comprises 461 residues: D-phenylhydantoinase (461 aa).

Residues H59, H61, and K151 each coordinate a divalent metal cation. Position 151 is an N6-carboxylysine (K151). Y156 contributes to the substrate binding site. A divalent metal cation contacts are provided by H182 and H239. S286 is a substrate binding site. D313 is an a divalent metal cation binding site. N335 lines the substrate pocket.

This sequence belongs to the metallo-dependent hydrolases superfamily. Hydantoinase/dihydropyrimidinase family. In terms of assembly, homotetramer. The cofactor is Zn(2+). Ni(2+) serves as cofactor. Co(2+) is required as a cofactor. Requires Mn(2+) as cofactor. Post-translationally, carboxylation allows a single lysine to coordinate two divalent metal cations.

The catalysed reaction is D-5-phenylhydantoin + H2O = N-carbamoyl-D-phenylglycine + H(+). Functionally, catalyzes the stereospecific hydrolysis of the cyclic amide bond of D-hydantoin derivatives with an aromatic side chains at the 5'-position. Has no activity on dihydropyrimidines. The physiological function is unknown. The sequence is that of D-phenylhydantoinase (hyuA) from Escherichia coli (strain K12).